We begin with the raw amino-acid sequence, 543 residues long: Proline--tRNA ligase, chloroplastic/mitochondrial (543 aa).

The tract at residues 41-63 is disordered; sequence ATAPSGTASPETKSSEVDRLRSD. The segment covering 53–63 has biased composition (basic and acidic residues); it reads KSSEVDRLRSD.

It belongs to the class-II aminoacyl-tRNA synthetase family.

Its subcellular location is the plastid. It is found in the chloroplast. The protein localises to the mitochondrion. It carries out the reaction tRNA(Pro) + L-proline + ATP = L-prolyl-tRNA(Pro) + AMP + diphosphate. Its function is as follows. Catalyzes the attachment of proline to tRNA(Pro) in a two-step reaction: proline is first activated by ATP to form Pro-AMP and then transferred to the acceptor end of tRNA(Pro). This chain is Proline--tRNA ligase, chloroplastic/mitochondrial, found in Arabidopsis thaliana (Mouse-ear cress).